A 230-amino-acid polypeptide reads, in one-letter code: Demethylluteothin O-methyltransferase (230 aa).

This sequence belongs to the methyltransferase superfamily.

The catalysed reaction is demethylluteothin + S-adenosyl-L-methionine = luteothin + S-adenosyl-L-homocysteine. The protein operates within antibiotic biosynthesis. It functions in the pathway polyketide biosynthesis. Functionally, methyltransferase involved in the biosynthesis of the antibiotic aureothin, a nitroaryl polyketide metabolite with antifungal, cytotoxic and insecticidal activities. Catalyzes the methylation of demethylluteothin to luteothin (also called deoxyaureothin). Is specific for its gamma-pyrone substrate, and does not act on the alpha-pyrone isomer. The protein is Demethylluteothin O-methyltransferase of Streptomyces thioluteus.